A 113-amino-acid chain; its full sequence is Hydrogenase maturation factor HypA (113 aa).

Histidine 2 lines the Ni(2+) pocket. Positions 73, 76, 89, and 92 each coordinate Zn(2+).

This sequence belongs to the HypA/HybF family.

Functionally, involved in the maturation of [NiFe] hydrogenases. Required for nickel insertion into the metal center of the hydrogenase. The protein is Hydrogenase maturation factor HypA of Moorella thermoacetica (strain ATCC 39073 / JCM 9320).